The following is a 172-amino-acid chain: Adenine phosphoribosyltransferase (172 aa).

This sequence belongs to the purine/pyrimidine phosphoribosyltransferase family. Homodimer.

The protein localises to the cytoplasm. The enzyme catalyses AMP + diphosphate = 5-phospho-alpha-D-ribose 1-diphosphate + adenine. The protein operates within purine metabolism; AMP biosynthesis via salvage pathway; AMP from adenine: step 1/1. Catalyzes a salvage reaction resulting in the formation of AMP, that is energically less costly than de novo synthesis. This is Adenine phosphoribosyltransferase from Prochlorococcus marinus (strain MIT 9303).